The sequence spans 718 residues: Cyclomaltodextrin glucanotransferase (718 aa).

The signal sequence occupies residues 1 to 34 (MFQMAKRAFLSTTLTLGLLAGSALPFLPASAVYA). Positions 35-172 (DPDTAVTNKQ…GIKIVIDFAP (138 aa)) are A1. Ca(2+) contacts are provided by Asp61, Asn63, Asn66, and Asn67. Cys77 and Cys84 are joined by a disulfide. Ca(2+) contacts are provided by Gly85 and Asp87. A substrate-binding site is contributed by 134 to 135 (YW). Asn173 serves as a coordination point for Ca(2+). A b region spans residues 173–236 (NHTSPAMETD…NLYDLADFNH (64 aa)). His174 is a binding site for substrate. Ca(2+) is bound at residue Ile224. Substrate-binding positions include 227–230 (NLYD) and Asp230. A Ca(2+)-binding site is contributed by Asp233. The segment at 237–440 (NNATIDKYFK…LRKSNPAIAY (204 aa)) is A2. Arg261 contacts substrate. Residue Asp263 is the Nucleophile of the active site. Substrate-binding positions include 266-267 (KH) and His267. Residue His267 coordinates Ca(2+). The active-site Proton donor is Glu291. Substrate-binding residues include His361, Asp405, and Arg409. Positions 441-528 (GSTQQRWINN…ATAVWQYTTA (88 aa)) are c. Positions 529 to 614 (ETTPTIGHVG…SNAYNNFTIL (86 aa)) are d. Positions 532–612 (PTIGHVGPVM…VNSNAYNNFT (81 aa)) constitute an IPT/TIG domain. The region spanning 613–718 (ILTGDQVTVR…GTATVTVNWQ (106 aa)) is the CBM20 domain. Positions 615 to 718 (TGDQVTVRFV…GTATVTVNWQ (104 aa)) are e.

The protein belongs to the glycosyl hydrolase 13 family. As to quaternary structure, monomer. Requires Ca(2+) as cofactor.

It localises to the secreted. It carries out the reaction Cyclizes part of a (1-&gt;4)-alpha-D-glucan chain by formation of a (1-&gt;4)-alpha-D-glucosidic bond.. The polypeptide is Cyclomaltodextrin glucanotransferase (Niallia circulans (Bacillus circulans)).